A 520-amino-acid polypeptide reads, in one-letter code: Bile acid--coenzyme A ligase (520 aa).

The protein belongs to the ATP-dependent AMP-binding enzyme family. Homodimer. Mg(2+) is required as a cofactor.

It carries out the reaction cholate + ATP + CoA = choloyl-CoA + AMP + diphosphate. The catalysed reaction is deoxycholate + ATP + CoA = deoxycholoyl-CoA + AMP + diphosphate. It catalyses the reaction chenodeoxycholate + ATP + CoA = chenodeoxycholoyl-CoA + AMP + diphosphate. It functions in the pathway lipid metabolism; bile acid biosynthesis. With respect to regulation, inhibited by diphosphate. Functions in the bile acid 7alpha-dehydroxylation pathway, which forms secondary bile acids via the 7alpha-dehydroxylation of primary bile acids, and is carried out by intestinal anaerobic bacteria. Catalyzes the initial step in this pathway, i.e. the ATP-dependent thioesterification of primary bile acids with coenzyme A. Is active with C-24 bile acids with free carboxyl groups such as cholate, deoxycholate and chenodeoxycholate. Produces AMP and pyrophosphate in addition to the bile acid-CoA thioester. This Clostridium scindens (strain JCM 10418 / VPI 12708) protein is Bile acid--coenzyme A ligase.